We begin with the raw amino-acid sequence, 240 residues long: Orotidine 5'-phosphate decarboxylase (240 aa).

Residues Asp-12, Lys-34, 62–71, Thr-117, Arg-180, Gln-189, Gly-209, and Arg-210 contribute to the substrate site; that span reads DMKLFDIGNT. Catalysis depends on Lys-64, which acts as the Proton donor.

The protein belongs to the OMP decarboxylase family. Type 1 subfamily. In terms of assembly, homodimer.

It catalyses the reaction orotidine 5'-phosphate + H(+) = UMP + CO2. The protein operates within pyrimidine metabolism; UMP biosynthesis via de novo pathway; UMP from orotate: step 2/2. Its function is as follows. Catalyzes the decarboxylation of orotidine 5'-monophosphate (OMP) to uridine 5'-monophosphate (UMP). The polypeptide is Orotidine 5'-phosphate decarboxylase (Ruegeria pomeroyi (strain ATCC 700808 / DSM 15171 / DSS-3) (Silicibacter pomeroyi)).